A 264-amino-acid polypeptide reads, in one-letter code: MKQYLELMQKVLDEGTQKNDRTGTGTLSIFGHQMRFNLQDGFPLVTTKRCHLRSIIHELLWFLQGDTNIAYLHENNVTIWDEWADENGDLGPVYGKQWRAWPTPDGRHIDQITTVLNQLKNDPDSRRIIVSAWNVGELDKMALAPCHAFFQFYVADGKLSCQLYQRSCDVFLGLPFNIASYALLVHMMAQQCDLEVGDFVWTGGDTHLYSNHMDQTHLQLSREPRPLPKLIIKRKPESIFDYRFEDFEIEGYDPHPGIKAPVAI.

A dUMP-binding site is contributed by Arg-21. His-51 contacts (6R)-5,10-methylene-5,6,7,8-tetrahydrofolate. 126-127 (RR) contacts dUMP. Cys-146 acts as the Nucleophile in catalysis. Residues 166–169 (RSCD), Asn-177, and 207–209 (HLY) contribute to the dUMP site. Residue Asp-169 participates in (6R)-5,10-methylene-5,6,7,8-tetrahydrofolate binding. Residue Ala-263 participates in (6R)-5,10-methylene-5,6,7,8-tetrahydrofolate binding.

Belongs to the thymidylate synthase family. Bacterial-type ThyA subfamily. In terms of assembly, homodimer.

The protein resides in the cytoplasm. The enzyme catalyses dUMP + (6R)-5,10-methylene-5,6,7,8-tetrahydrofolate = 7,8-dihydrofolate + dTMP. It participates in pyrimidine metabolism; dTTP biosynthesis. Catalyzes the reductive methylation of 2'-deoxyuridine-5'-monophosphate (dUMP) to 2'-deoxythymidine-5'-monophosphate (dTMP) while utilizing 5,10-methylenetetrahydrofolate (mTHF) as the methyl donor and reductant in the reaction, yielding dihydrofolate (DHF) as a by-product. This enzymatic reaction provides an intracellular de novo source of dTMP, an essential precursor for DNA biosynthesis. This chain is Thymidylate synthase, found in Escherichia coli (strain 55989 / EAEC).